A 97-amino-acid polypeptide reads, in one-letter code: Aspartyl/glutamyl-tRNA(Asn/Gln) amidotransferase subunit C (97 aa).

The protein belongs to the GatC family. Heterotrimer of A, B and C subunits.

It catalyses the reaction L-glutamyl-tRNA(Gln) + L-glutamine + ATP + H2O = L-glutaminyl-tRNA(Gln) + L-glutamate + ADP + phosphate + H(+). The catalysed reaction is L-aspartyl-tRNA(Asn) + L-glutamine + ATP + H2O = L-asparaginyl-tRNA(Asn) + L-glutamate + ADP + phosphate + 2 H(+). In terms of biological role, allows the formation of correctly charged Asn-tRNA(Asn) or Gln-tRNA(Gln) through the transamidation of misacylated Asp-tRNA(Asn) or Glu-tRNA(Gln) in organisms which lack either or both of asparaginyl-tRNA or glutaminyl-tRNA synthetases. The reaction takes place in the presence of glutamine and ATP through an activated phospho-Asp-tRNA(Asn) or phospho-Glu-tRNA(Gln). The chain is Aspartyl/glutamyl-tRNA(Asn/Gln) amidotransferase subunit C from Anaeromyxobacter sp. (strain K).